The following is a 970-amino-acid chain: Longitudinals lacking protein, isoforms F/I/K/T (970 aa).

The BTB domain occupies 32-97 (VDCTLAAEGK…MYRGEVNISQ (66 aa)). Disordered regions lie at residues 115–200 (LSDN…SSVL), 228–340 (SSGP…ASAS), 447–468 (DAQQ…EGAQ), and 790–843 (QTVH…LQDD). Composition is skewed to low complexity over residues 162–175 (SGDV…SSSP), 228–251 (SSGP…LTST), 263–293 (TSST…QTTS), and 329–340 (NSATGPNPASAS). 2 stretches are compositionally biased toward polar residues: residues 447-456 (DAQQRDPQAS) and 808-818 (QLQTHHIQTVV). Residues 819-828 (QSSSGQQQHD) are compositionally biased toward low complexity. A C2H2-type 1; degenerate zinc finger spans residues 903–925 (YVCRHCGKKYRWKSTLRRHENVE). The segment at 933-955 (HPCPYCSYKAKQRGNLGVHVRKH) adopts a C2H2-type 2 zinc-finger fold.

By stage 11, isoform F is expressed throughout the mesoderm whereas isoform T, and at low levels isoform I, is expressed throughout the ectoderm. Isoform K is expressed in both mesoderm and ectoderm. Expression becomes restricted during later stages; starting from stage 14 to 15, isoform F is expressed in the gut. Isoform I is expressed in the CNS. Isoform I and isoform F show expression in the epithelium starting at stage 14, though for isoform I the CNS expression remains predominant. Expression is also seen in specific types of cells in the embryo; isoform K is expressed in the ventral furrow at stage 5 and in a dynamic pattern in the ventral neurogenic region starting at stage 7. Isoform T is expressed around the tracheal pits at stage 11. Isoform F shows transient enrichment in a dorsal cell layer in the CNS at stages 13 and 14.

It localises to the nucleus. Putative transcription factor required for axon growth and guidance in the central and peripheral nervous systems. Repels CNS axons away from the midline by promoting the expression of the midline repellent sli and its receptor robo. The chain is Longitudinals lacking protein, isoforms F/I/K/T from Drosophila melanogaster (Fruit fly).